The sequence spans 306 residues: Pantothenate kinase (306 aa).

91 to 98 provides a ligand contact to ATP; sequence GSVAVGKS.

It belongs to the prokaryotic pantothenate kinase family.

Its subcellular location is the cytoplasm. It carries out the reaction (R)-pantothenate + ATP = (R)-4'-phosphopantothenate + ADP + H(+). Its pathway is cofactor biosynthesis; coenzyme A biosynthesis; CoA from (R)-pantothenate: step 1/5. This chain is Pantothenate kinase, found in Streptococcus pyogenes serotype M5 (strain Manfredo).